Here is a 538-residue protein sequence, read N- to C-terminus: Cytochrome c-552 (538 aa).

The signal sequence occupies residues 1–55; that stretch reads MKIYLRFVWILIIILNFLLNLFITTNGVIIVNAFKKSLIVAASFASLSLFNSATA. Residue His133 participates in heme c binding. Heme contacts are provided by Cys161, Cys164, and Lys165. Heme c contacts are provided by Cys199, Cys202, His203, Cys264, Cys267, and His268. 4 residues coordinate Ca(2+): Glu270, Tyr271, Lys316, and Gln318. A substrate-binding site is contributed by Tyr271. His319 provides a ligand contact to substrate. Positions 330, 337, 340, 341, 356, 369, 372, 373, and 448 each coordinate heme c.

Belongs to the cytochrome c-552 family. It depends on Ca(2+) as a cofactor. The cofactor is heme c.

Its subcellular location is the periplasm. The enzyme catalyses 6 Fe(III)-[cytochrome c] + NH4(+) + 2 H2O = 6 Fe(II)-[cytochrome c] + nitrite + 8 H(+). Its pathway is nitrogen metabolism; nitrate reduction (assimilation). Its function is as follows. Catalyzes the reduction of nitrite to ammonia, consuming six electrons in the process. In Haemophilus influenzae (strain 86-028NP), this protein is Cytochrome c-552.